The following is an 89-amino-acid chain: Small ribosomal subunit protein bS20 (89 aa).

Disordered regions lie at residues Met-1–Lys-25 and Lys-69–Ser-89. A compositionally biased stretch (basic residues) spans Ala-7–His-20.

This sequence belongs to the bacterial ribosomal protein bS20 family.

Functionally, binds directly to 16S ribosomal RNA. This Geobacillus kaustophilus (strain HTA426) protein is Small ribosomal subunit protein bS20.